Reading from the N-terminus, the 512-residue chain is Mesoderm induction early response protein 1 (512 aa).

Residues 1 to 16 are compositionally biased toward low complexity; it reads MAEPSVESSSPGGSAT. 2 disordered regions span residues 1–63 and 75–173; these read MAEP…REGD and YGST…EDYI. A Phosphoserine modification is found at S10. Positions 17-36 are enriched in basic and acidic residues; that stretch reads SDDHEFDPSADMLVHDFDDE. Acidic residues-rich tracts occupy residues 37 to 46 and 83 to 105; these read RTLEEEEMME and EEDE…DNDD. Residues 129–144 are compositionally biased toward polar residues; it reads QSSNDDPSQSVASQDA. Phosphoserine is present on S141. Phosphotyrosine is present on Y155. Phosphoserine is present on residues S160 and S166. Residues 160 to 173 are compositionally biased toward acidic residues; it reads SEVEEESEEDEDYI. The region spanning 180 to 278 is the ELM2 domain; it reads KEIMVGSMFQ…EALRRLRFNV (99 aa). Positions 180–284 are interaction with HDAC1; that stretch reads KEIMVGSMFQ…RFNVKAAREE (105 aa). K239 participates in a covalent cross-link: Glycyl lysine isopeptide (Lys-Gly) (interchain with G-Cter in SUMO2). Residues 283-335 enclose the SANT domain; sequence EELSVWTEEECRNFEQGLKAYGKDFHLIQANKVRTRSVGECVAFYYMWKKSER. Residues 366 to 512 are disordered; that stretch reads ESESAASSRA…KFEELENTDD (147 aa). Phosphoserine is present on residues S367, S369, and S377. Residues 396–409 show a composition bias toward polar residues; the sequence is TVSTTNQNGVSSNG. Positions 414–423 are enriched in basic and acidic residues; that stretch reads LNKEEVKVEG. K420 is covalently cross-linked (Glycyl lysine isopeptide (Lys-Gly) (interchain with G-Cter in SUMO2)). T448 bears the Phosphothreonine mark. Over residues 462-475 the composition is skewed to basic and acidic residues; that stretch reads ARNENDFDEKSERP. The span at 482–494 shows a compositional bias: polar residues; sequence NSNGKESPGSSEF. 3 positions are modified to phosphoserine: S483, S488, and S491.

In terms of assembly, interacts with HDAC1. Part of a complex containing at least CDYL, MIER1, MIER2, HDAC1 and HDAC2.

It is found in the nucleus. Functionally, transcriptional repressor regulating the expression of a number of genes including SP1 target genes. Probably functions through recruitment of HDAC1 a histone deacetylase involved in chromatin silencing. The chain is Mesoderm induction early response protein 1 (MIER1) from Pongo abelii (Sumatran orangutan).